Here is an 883-residue protein sequence, read N- to C-terminus: Phosphoenolpyruvate carboxylase (883 aa).

Catalysis depends on residues histidine 138 and lysine 546.

The protein belongs to the PEPCase type 1 family. Requires Mg(2+) as cofactor.

It catalyses the reaction oxaloacetate + phosphate = phosphoenolpyruvate + hydrogencarbonate. In terms of biological role, forms oxaloacetate, a four-carbon dicarboxylic acid source for the tricarboxylic acid cycle. This chain is Phosphoenolpyruvate carboxylase, found in Erwinia tasmaniensis (strain DSM 17950 / CFBP 7177 / CIP 109463 / NCPPB 4357 / Et1/99).